We begin with the raw amino-acid sequence, 305 residues long: MDMLTLWNLEREDMEKILEDSIYFKKNRYGHDILKNKNIALIFESPSTRTRMSFDLAVNELGGHSMVMNENEIHLGKKESIKDTAKVMSRFVDVIVARVKSHKTLEDLAFYGTVPVINALSDLSHPCQVLADLLTIKENGKDFKNLKLAYFGDGNNVSNSLMIAGAILGMNIFIATPRSYEPNGIFVKKALEIIAKYGEGSLTLTDDPIEASKNADVLYTDVWISMSDKNKDLEDVKRIFPKFQINSKLLSNAKKDAMVLHCLPANRGMEITDEVIDSKQSKVFDQAENRLHVQKAVLKYVLKDK.

Carbamoyl phosphate contacts are provided by residues 47-50 (STRT), arginine 98, and 125-128 (HPCQ). L-ornithine-binding positions include asparagine 156, aspartate 221, and 225–226 (SM). Carbamoyl phosphate-binding positions include 262–263 (CL) and arginine 290.

Belongs to the aspartate/ornithine carbamoyltransferase superfamily. OTCase family.

It is found in the cytoplasm. The enzyme catalyses carbamoyl phosphate + L-ornithine = L-citrulline + phosphate + H(+). The protein operates within amino-acid biosynthesis; L-arginine biosynthesis; L-arginine from L-ornithine and carbamoyl phosphate: step 1/3. Its function is as follows. Reversibly catalyzes the transfer of the carbamoyl group from carbamoyl phosphate (CP) to the N(epsilon) atom of ornithine (ORN) to produce L-citrulline. The polypeptide is Ornithine carbamoyltransferase (Methanococcus vannielii (strain ATCC 35089 / DSM 1224 / JCM 13029 / OCM 148 / SB)).